The sequence spans 500 residues: Amino-acid acetyltransferase, mitochondrial (500 aa).

A mitochondrion-targeting transit peptide spans 1-19 (MQKPSLSQDLIWILKSVQS). One can recognise an N-acetyltransferase domain in the interval 336–496 (FLGPKCLTDG…YMSVIDKIQP (161 aa)).

This sequence belongs to the acetyltransferase family.

It is found in the mitochondrion. It carries out the reaction L-glutamate + acetyl-CoA = N-acetyl-L-glutamate + CoA + H(+). It participates in amino-acid biosynthesis; L-arginine biosynthesis; N(2)-acetyl-L-ornithine from L-glutamate: step 1/4. N-acetylglutamate synthase involved in arginine biosynthesis. The protein is Amino-acid acetyltransferase, mitochondrial (arg6) of Schizosaccharomyces pombe (strain 972 / ATCC 24843) (Fission yeast).